The sequence spans 260 residues: Carbonic anhydrase 3 (260 aa).

Residue Ala2 is modified to N-acetylalanine. The 257-residue stretch at 3 to 259 folds into the Alpha-carbonic anhydrase domain; sequence KEWGYADHNG…IKGRIVKASF (257 aa). 4 positions are modified to phosphoserine: Ser29, Ser43, Ser50, and Ser55. Residues 64 to 67 form an involved in proton transfer region; the sequence is KTCR. At Thr73 the chain carries Phosphothreonine. Residues His94, His96, and His119 each contribute to the Zn(2+) site. Tyr127 is subject to Phosphotyrosine. The residue at position 176 (Thr176) is a Phosphothreonine. Cys182 and Cys187 each carry S-glutathionyl cysteine. 198–199 lines the substrate pocket; sequence TT. The residue at position 216 (Thr216) is a Phosphothreonine. A Phosphoserine modification is found at Ser219.

It belongs to the alpha-carbonic anhydrase family. It depends on Zn(2+) as a cofactor. Post-translationally, S-thiolated both by thiol-disulfide exchange with glutathione disulfide and by oxyradical-initiated S-thiolation with reduced glutathione. In terms of processing, S-glutathionylated in hepatocytes under oxidative stress.

It is found in the cytoplasm. The enzyme catalyses hydrogencarbonate + H(+) = CO2 + H2O. With respect to regulation, inhibited by acetazolamide. Reversible hydration of carbon dioxide. The chain is Carbonic anhydrase 3 from Sus scrofa (Pig).